Consider the following 95-residue polypeptide: Cell division protein FtsB (95 aa).

Over 1-3 the chain is Cytoplasmic; the sequence is MRW. Residues 4-21 traverse the membrane as a helical segment; the sequence is VLAGLTALLLWLQGLLWF. The Periplasmic segment spans residues 22 to 95; that stretch reads GEGGLNDVRG…QIIEREDDAR (74 aa). Residues 26 to 76 are a coiled coil; it reads LNDVRGLSRSVEAQREEVDRLRQRNQALEAEVNDLKTGLEALEERARSELG.

The protein belongs to the FtsB family. As to quaternary structure, part of a complex composed of FtsB, FtsL and FtsQ.

It localises to the cell inner membrane. Essential cell division protein. May link together the upstream cell division proteins, which are predominantly cytoplasmic, with the downstream cell division proteins, which are predominantly periplasmic. This is Cell division protein FtsB from Alkalilimnicola ehrlichii (strain ATCC BAA-1101 / DSM 17681 / MLHE-1).